Reading from the N-terminus, the 178-residue chain is Extracellular fatty acid-binding protein (178 aa).

An N-terminal signal peptide occupies residues 1–20 (MRTLALSLGLALLCLLHAKA). An enterobactin-binding site is contributed by Thr43. 1-tetradecanoyl-sn-glycerol 3-phosphate contacts are provided by Tyr72 and Lys104. Cys80 and Cys173 are disulfide-bonded. 3 residues coordinate enterobactin: Lys104, Arg123, and Arg134. Residue 134-136 (RLY) coordinates 1-tetradecanoyl-sn-glycerol 3-phosphate.

This sequence belongs to the calycin superfamily. Lipocalin family. As to quaternary structure, monomer.

The protein localises to the secreted. Siderocalin-like lipocalin tightly binding a variety of bacterial ferric siderophores, also binds long-chain unsaturated fatty acids such as linoleic acid, oleic acid, arachidonic acid and, with a lower affinity, long chain saturated fatty acids such as steraic acid. May act as an antibacterial factor, through dual ligand specificity, both as a siderophore-sequestrating molecule and a lysophosphatidic acid (LPA) sensor. The sequence is that of Extracellular fatty acid-binding protein from Coturnix japonica (Japanese quail).